A 711-amino-acid polypeptide reads, in one-letter code: Forkhead box protein P1 (711 aa).

The segment covering 1-19 (MMQESGSEAKSNGSTIQNG) has biased composition (polar residues). The segment at 1–41 (MMQESGSEAKSNGSTIQNGSSGGNHLLECGTLRDTRSNGEA) is disordered. Ser115 carries the post-translational modification Phosphoserine. Disordered regions lie at residues 273 to 292 (HTAEETTGSNHSSLDLTSTC) and 305 to 332 (MNPHASTNGQLSVHTPKRESLSHEEHPH). The segment covering 305–317 (MNPHASTNGQLSV) has biased composition (polar residues). Positions 320 to 332 (PKRESLSHEEHPH) are enriched in basic and acidic residues. Lys321 is covalently cross-linked (Glycyl lysine isopeptide (Lys-Gly) (interchain with G-Cter in SUMO2)). The C2H2-type zinc finger occupies 340-365 (GVCKWPGCEAVCDDFPAFLKHLNSEH). The segment at 382-403 (VQQLELQLAKDKERLQAMMTHL) is leucine-zipper. Residues Lys406 and Lys411 each participate in a glycyl lysine isopeptide (Lys-Gly) (interchain with G-Cter in SUMO2) cross-link. Residues 416 to 420 (PLNLV) are CTBP1-binding. Over residues 424–437 (TLSKSASEASPQSL) the composition is skewed to polar residues. A disordered region spans residues 424–456 (TLSKSASEASPQSLPHTPTTPTAPLTPVTQGPS). A compositionally biased stretch (low complexity) spans 438-452 (PHTPTTPTAPLTPVT). Lys476 is covalently cross-linked (Glycyl lysine isopeptide (Lys-Gly) (interchain with G-Cter in SUMO2)). A DNA-binding region (fork-head) is located at residues 499 to 589 (RPPFTYASLI…PQKISGNPSL (91 aa)). The segment at 645–711 (EHTNSNESDS…EDEPVNEDME (67 aa)) is disordered. Polar residues predominate over residues 646-657 (HTNSNESDSSPG). Phosphothreonine is present on Thr687. Ser692 bears the Phosphoserine mark. The span at 701-711 (YEDEPVNEDME) shows a compositional bias: acidic residues.

In terms of assembly, forms homodimers and heterodimers with FOXP2 and FOXP4. Dimerization is required for DNA-binding. Self-associates. Interacts with CTBP1. Interacts with NCOR2 and AR. Interacts with FOXP2. Interacts with TBR1. Interacts with AURKA; this interaction facilitates the phosphorylation of FOXP1, which suppresses the expression of FBXL7. Interacts with ZMYM2.

The protein resides in the nucleus. Transcriptional repressor. Can act with CTBP1 to synergistically repress transcription but CTPBP1 is not essential. Plays an important role in the specification and differentiation of lung epithelium. Acts cooperatively with FOXP4 to regulate lung secretory epithelial cell fate and regeneration by restricting the goblet cell lineage program; the function may involve regulation of AGR2. Essential transcriptional regulator of B-cell development. Involved in regulation of cardiac muscle cell proliferation. Involved in the columnar organization of spinal motor neurons. Promotes the formation of the lateral motor neuron column (LMC) and the preganglionic motor column (PGC) and is required for respective appropriate motor axon projections. The segment-appropriate generation of spinal cord motor columns requires cooperation with other Hox proteins. Can regulate PITX3 promoter activity; may promote midbrain identity in embryonic stem cell-derived dopamine neurons by regulating PITX3. Negatively regulates the differentiation of T follicular helper cells T(FH)s. Involved in maintenance of hair follicle stem cell quiescence; the function probably involves regulation of FGF18. Represses transcription of various pro-apoptotic genes and cooperates with NF-kappa B-signaling in promoting B-cell expansion by inhibition of caspase-dependent apoptosis. Binds to CSF1R promoter elements and is involved in regulation of monocyte differentiation and macrophage functions; repression of CSF1R in monocytes seems to involve NCOR2 as corepressor. Involved in endothelial cell proliferation, tube formation and migration indicative for a role in angiogenesis; the role in neovascularization seems to implicate suppression of SEMA5B. Can negatively regulate androgen receptor signaling. Acts as a transcriptional activator of the FBXL7 promoter; this activity is regulated by AURKA. The sequence is that of Forkhead box protein P1 (Foxp1) from Rattus norvegicus (Rat).